We begin with the raw amino-acid sequence, 132 residues long: Small ribosomal subunit protein uS8 (132 aa).

This sequence belongs to the universal ribosomal protein uS8 family. In terms of assembly, part of the 30S ribosomal subunit. Contacts proteins S5 and S12.

Functionally, one of the primary rRNA binding proteins, it binds directly to 16S rRNA central domain where it helps coordinate assembly of the platform of the 30S subunit. The polypeptide is Small ribosomal subunit protein uS8 (Rhizobium johnstonii (strain DSM 114642 / LMG 32736 / 3841) (Rhizobium leguminosarum bv. viciae)).